The sequence spans 142 residues: Large ribosomal subunit protein uL11 (142 aa).

It belongs to the universal ribosomal protein uL11 family. As to quaternary structure, part of the ribosomal stalk of the 50S ribosomal subunit. Interacts with L10 and the large rRNA to form the base of the stalk. L10 forms an elongated spine to which L12 dimers bind in a sequential fashion forming a multimeric L10(L12)X complex. Post-translationally, one or more lysine residues are methylated.

Functionally, forms part of the ribosomal stalk which helps the ribosome interact with GTP-bound translation factors. This Shewanella sp. (strain ANA-3) protein is Large ribosomal subunit protein uL11.